A 186-amino-acid chain; its full sequence is Pyridoxal 5'-phosphate synthase subunit PdxT (186 aa).

46 to 48 (GES) lines the L-glutamine pocket. Cys78 acts as the Nucleophile in catalysis. L-glutamine contacts are provided by residues Arg105 and 134-135 (IR). Catalysis depends on charge relay system residues His170 and Glu172.

The protein belongs to the glutaminase PdxT/SNO family. In terms of assembly, in the presence of PdxS, forms a dodecamer of heterodimers. Only shows activity in the heterodimer.

It catalyses the reaction aldehydo-D-ribose 5-phosphate + D-glyceraldehyde 3-phosphate + L-glutamine = pyridoxal 5'-phosphate + L-glutamate + phosphate + 3 H2O + H(+). It carries out the reaction L-glutamine + H2O = L-glutamate + NH4(+). Its pathway is cofactor biosynthesis; pyridoxal 5'-phosphate biosynthesis. In terms of biological role, catalyzes the hydrolysis of glutamine to glutamate and ammonia as part of the biosynthesis of pyridoxal 5'-phosphate. The resulting ammonia molecule is channeled to the active site of PdxS. The protein is Pyridoxal 5'-phosphate synthase subunit PdxT of Clostridium acetobutylicum (strain ATCC 824 / DSM 792 / JCM 1419 / IAM 19013 / LMG 5710 / NBRC 13948 / NRRL B-527 / VKM B-1787 / 2291 / W).